The primary structure comprises 448 residues: MRKYFGTDGIRGKVGTTPITPEFMLKLGWAAGQVFKENDKKILIGKDTRISGYMFESALESGIVAAGADVRLVGPMPTPAIAYLTRTFRASAGIVISASHNPYTDNGIKFFSAEGGKISDELEERIEYFLEQPMEVVESSQIGRAKRIDDAAGRYIEYCKGTFPIGLQLSGLKIVVDCADGATYHVAPRVFSELGAEVISIGVNPDGLNINEFSGATKPELLRKNVLAEEADLGIALDGDGDRLILVDRHGVVRDGDDILYIIANHLMRTGRFSGGVVGTLMSNFGLELAFSETGIGFSRAAVGDRYVNEKLMQHGWVLGGEPSGHIVCRSITTTGDGIIAALQVLRAMVEEGKALDELLVGLVKFPQKLKNIRVAKRFVPNEEPTLQKAIAVANERLNGLGRVLLRASGTEPLIRVMVEGRDNDTVDELVEYLVEEVNSVVSAKADT.

Ser-99 functions as the Phosphoserine intermediate in the catalytic mechanism. Residues Ser-99, Asp-238, Asp-240, and Asp-242 each contribute to the Mg(2+) site. Residue Ser-99 is modified to Phosphoserine.

This sequence belongs to the phosphohexose mutase family. Mg(2+) serves as cofactor. Post-translationally, activated by phosphorylation.

It catalyses the reaction alpha-D-glucosamine 1-phosphate = D-glucosamine 6-phosphate. Its function is as follows. Catalyzes the conversion of glucosamine-6-phosphate to glucosamine-1-phosphate. This Marinomonas sp. (strain MWYL1) protein is Phosphoglucosamine mutase.